The following is a 327-amino-acid chain: uncharacterized protein (327 aa).

Disordered regions lie at residues 127 to 170 and 298 to 327; these read LSEF…GIYR and NFED…LKRR. 3 positions are modified to phosphoserine: Ser153, Ser154, and Ser309. Residues 317–327 are compositionally biased toward basic residues; sequence YRKRKKNLKRR.

This is an uncharacterized protein from Schizosaccharomyces pombe (strain 972 / ATCC 24843) (Fission yeast).